The chain runs to 424 residues: MAKIVVTGGQALHGEVNISGAKNAVLPILCATLLADAPVEISNVPHLHDVITTVKLLSELGAEVTIDEGTLAKGRSILVDPRSVTHQVAPYELVKTMRASILVLGPLLARYGTAEVSLPGGCAIGSRPVDQHIKGLQALGADISVENGYIKATSHGRLKGGRYVFDMVSVTGTENVLMAAVLAEGTTVLENAAMEPEVTDLADCLIALGAQIEGAGTPRIVVQGVERLGGGHHAVLPDRIETGTFLVAAAMTGGSVTVRRARPETLDAVLDKLTEAGATITTTADSITLDMQGKRPRAVSLTTAPYPAFPTDMQAQFMALNCVADGVGVINETIFENRFMHVNELLRLGADIQVEGHTAIVRGAERLSGAPVMATDLRASASLILAGLVADGDTTIDRIYHLDRGYENIEEKLGALGATIQRTA.

A phosphoenolpyruvate-binding site is contributed by Lys-22–Asn-23. Arg-98 lines the UDP-N-acetyl-alpha-D-glucosamine pocket. The active-site Proton donor is the Cys-122. Cys-122 carries the 2-(S-cysteinyl)pyruvic acid O-phosphothioketal modification. UDP-N-acetyl-alpha-D-glucosamine contacts are provided by residues Arg-127–Gln-131, Asp-312, and Ile-334.

It belongs to the EPSP synthase family. MurA subfamily.

The protein resides in the cytoplasm. It carries out the reaction phosphoenolpyruvate + UDP-N-acetyl-alpha-D-glucosamine = UDP-N-acetyl-3-O-(1-carboxyvinyl)-alpha-D-glucosamine + phosphate. It participates in cell wall biogenesis; peptidoglycan biosynthesis. In terms of biological role, cell wall formation. Adds enolpyruvyl to UDP-N-acetylglucosamine. In Xanthomonas euvesicatoria pv. vesicatoria (strain 85-10) (Xanthomonas campestris pv. vesicatoria), this protein is UDP-N-acetylglucosamine 1-carboxyvinyltransferase.